The chain runs to 106 residues: A-type ATP synthase subunit F (106 aa).

The protein belongs to the V-ATPase F subunit family. In terms of assembly, has multiple subunits with at least A(3), B(3), C, D, E, F, H, I and proteolipid K(x).

The protein localises to the cell membrane. Functionally, component of the A-type ATP synthase that produces ATP from ADP in the presence of a proton gradient across the membrane. The sequence is that of A-type ATP synthase subunit F from Methanothermobacter thermautotrophicus (strain ATCC 29096 / DSM 1053 / JCM 10044 / NBRC 100330 / Delta H) (Methanobacterium thermoautotrophicum).